The following is a 551-amino-acid chain: DEAD-box ATP-dependent RNA helicase 47, mitochondrial (551 aa).

The transit peptide at 1–29 directs the protein to the mitochondrion; it reads MAASTSTRFLVLLKDFSAFRKISWTCAAT. A Q motif motif is present at residues 110 to 138; that stretch reads KSFEELGLPDSLLDSLEREGFSVPTDVQS. One can recognise a Helicase ATP-binding domain in the interval 141 to 340; that stretch reads VPAIIKGHDA…KSWSHEPVLV (200 aa). Position 154-161 (154-161) interacts with ATP; that stretch reads SYTGSGKT. The DEAD box signature appears at 274–277; it reads DEVD. The Helicase C-terminal domain occupies 397–548; that stretch reads TLRRCVHALD…ELVVTEEDKA (152 aa).

It belongs to the DEAD box helicase family. In terms of tissue distribution, mostly expressed in leaves and flowers, and, to a lower extent, in roots, seedlings and siliques, especially in meristematic regions.

The protein resides in the mitochondrion. The enzyme catalyses ATP + H2O = ADP + phosphate + H(+). In terms of biological role, essential protein required during embryogenesis. Required for mitochondrial metabolism. Necessary for normal plasmodesmata (PD) development and aperture regulation. The sequence is that of DEAD-box ATP-dependent RNA helicase 47, mitochondrial (RH47) from Arabidopsis thaliana (Mouse-ear cress).